The following is a 245-amino-acid chain: Carboxymethylenebutenolidase homolog (245 aa).

Alanine 2 is modified (N-acetylalanine). Catalysis depends on residues cysteine 132, aspartate 179, and histidine 212. At serine 223 the chain carries Phosphoserine.

Belongs to the dienelactone hydrolase family.

It localises to the cytoplasm. Its subcellular location is the cytosol. Cysteine hydrolase. The chain is Carboxymethylenebutenolidase homolog (Cmbl) from Mus musculus (Mouse).